The sequence spans 963 residues: Pyruvate, phosphate dikinase 1, chloroplastic (963 aa).

The N-terminal 76 residues, 1–76 (MLYIRKKMTS…GLHRETKARA (76 aa)), are a transit peptide targeting the chloroplast. At Thr-543 the chain carries Phosphothreonine; by PDRP1. The active-site Tele-phosphohistidine intermediate is the His-545. The substrate site is built by Arg-651, Arg-707, Glu-836, Gly-857, Thr-858, Asn-859, and Asp-860. Glu-836 serves as a coordination point for Mg(2+). Residue Asp-860 coordinates Mg(2+). The active-site Proton donor is Cys-922.

It belongs to the PEP-utilizing enzyme family. In terms of assembly, homotetramer. Interacts with RP1 and RP2. It depends on Mg(2+) as a cofactor. In terms of processing, phosphorylation of Thr-543 in the dark inactivates the enzyme. Dephosphorylation upon light stimulation reactivates the enzyme. Isoform 1 is expressed in leaves, flowers and siliques. Isoform 2 is found in cotyledons, rosette and cauline leaves, petioles, flowers and siliques.

The protein resides in the plastid. Its subcellular location is the chloroplast. The protein localises to the cytoplasm. The catalysed reaction is pyruvate + phosphate + ATP = phosphoenolpyruvate + AMP + diphosphate + H(+). Its activity is regulated as follows. Activated by light-induced dephosphorylation. Inhibited by dark-induced phosphorylation. Both reactions are catalyzed by PDRP1. Its function is as follows. Formation of phosphoenolpyruvate. May be involved in regulating the flux of carbon into starch and fatty acids of seeds and in the remobilization of nitrogen reserves in senescing leaves. In Arabidopsis thaliana (Mouse-ear cress), this protein is Pyruvate, phosphate dikinase 1, chloroplastic (PPDK).